Reading from the N-terminus, the 330-residue chain is Phenylalanine--tRNA ligase alpha subunit (330 aa).

Glu254 lines the Mg(2+) pocket.

This sequence belongs to the class-II aminoacyl-tRNA synthetase family. Phe-tRNA synthetase alpha subunit type 1 subfamily. As to quaternary structure, tetramer of two alpha and two beta subunits. Requires Mg(2+) as cofactor.

It localises to the cytoplasm. The enzyme catalyses tRNA(Phe) + L-phenylalanine + ATP = L-phenylalanyl-tRNA(Phe) + AMP + diphosphate + H(+). This is Phenylalanine--tRNA ligase alpha subunit (pheS) from Neisseria meningitidis serogroup B (strain ATCC BAA-335 / MC58).